Consider the following 274-residue polypeptide: 3-methyl-2-oxobutanoate hydroxymethyltransferase (274 aa).

Mg(2+) is bound by residues aspartate 49 and aspartate 88. Residues 49 to 50 (DS), aspartate 88, and lysine 118 each bind 3-methyl-2-oxobutanoate. A Mg(2+)-binding site is contributed by glutamate 120. Glutamate 187 functions as the Proton acceptor in the catalytic mechanism.

It belongs to the PanB family. As to quaternary structure, homodecamer; pentamer of dimers. The cofactor is Mg(2+).

The protein resides in the cytoplasm. It carries out the reaction 3-methyl-2-oxobutanoate + (6R)-5,10-methylene-5,6,7,8-tetrahydrofolate + H2O = 2-dehydropantoate + (6S)-5,6,7,8-tetrahydrofolate. It functions in the pathway cofactor biosynthesis; (R)-pantothenate biosynthesis; (R)-pantoate from 3-methyl-2-oxobutanoate: step 1/2. Functionally, catalyzes the reversible reaction in which hydroxymethyl group from 5,10-methylenetetrahydrofolate is transferred onto alpha-ketoisovalerate to form ketopantoate. The sequence is that of 3-methyl-2-oxobutanoate hydroxymethyltransferase from Rhodopseudomonas palustris (strain HaA2).